The chain runs to 280 residues: tRNA pseudouridine synthase A (280 aa).

The Nucleophile role is filled by Asp60. Tyr119 provides a ligand contact to substrate.

The protein belongs to the tRNA pseudouridine synthase TruA family. Homodimer.

It catalyses the reaction uridine(38/39/40) in tRNA = pseudouridine(38/39/40) in tRNA. In terms of biological role, formation of pseudouridine at positions 38, 39 and 40 in the anticodon stem and loop of transfer RNAs. This is tRNA pseudouridine synthase A from Treponema pallidum (strain Nichols).